Here is a 320-residue protein sequence, read N- to C-terminus: MAKYRIMTFDGGGTLGALSLQLLNRLARQNPKLISRTHVFSGNSIGSFTALALASGRSPRETLQYFEDEILPAFSISRPGGPVFNQQLPYSGFIKAVRNFFPADLQLIDLRKRIVVPSFKLYSQKLDRWTPVLFHNFPGSPYLNEKVSDVILRSSGAPATQRAYQNYVDGYVVATNPSTASIAFAVGKANVPLDQIAVLSIGTGEAPTRLRRDTRGWGMVSADNIRPENLKNLPPNWGVLLDRSPNEPLLPFLQMIAGGNGYYESMVSANLLGDRFFRLDPRIPNFSKTDPAVVPAVIEIANKTNLQPANQFIEKNWGSK.

The region spanning 7–182 (MTFDGGGTLG…VATNPSTASI (176 aa)) is the PNPLA domain. The short motif at 11 to 16 (GGGTLG) is the GXGXXG element. Residues 42–46 (GNSIG) carry the GXSXG motif. Serine 44 functions as the Nucleophile in the catalytic mechanism. Catalysis depends on aspartate 169, which acts as the Proton acceptor.

It is found in the spore coat. In Bacillus subtilis (strain 168), this protein is Putative sporulation hydrolase CotR (cotR).